A 251-amino-acid chain; its full sequence is Large ribosomal subunit protein uL16m (251 aa).

Residues 1 to 29 (MWRLLARASAPLLRVPLSDSWALLPASAG) constitute a mitochondrion transit peptide.

This sequence belongs to the universal ribosomal protein uL16 family. Component of the mitochondrial large ribosomal subunit (mt-LSU). Mature mammalian 55S mitochondrial ribosomes consist of a small (28S) and a large (39S) subunit. The 28S small subunit contains a 12S ribosomal RNA (12S mt-rRNA) and 30 different proteins. The 39S large subunit contains a 16S rRNA (16S mt-rRNA), a copy of mitochondrial valine transfer RNA (mt-tRNA(Val)), which plays an integral structural role, and 52 different proteins.

Its subcellular location is the mitochondrion. This chain is Large ribosomal subunit protein uL16m (MRPL16), found in Homo sapiens (Human).